A 212-amino-acid polypeptide reads, in one-letter code: Ribosomal RNA small subunit methyltransferase G (212 aa).

S-adenosyl-L-methionine is bound by residues G80, L85, 131–132 (AE), and R146.

Belongs to the methyltransferase superfamily. RNA methyltransferase RsmG family.

Its subcellular location is the cytoplasm. It carries out the reaction guanosine(527) in 16S rRNA + S-adenosyl-L-methionine = N(7)-methylguanosine(527) in 16S rRNA + S-adenosyl-L-homocysteine. Functionally, specifically methylates the N7 position of guanine in position 527 of 16S rRNA. The sequence is that of Ribosomal RNA small subunit methyltransferase G from Xanthomonas campestris pv. campestris (strain B100).